Here is a 162-residue protein sequence, read N- to C-terminus: MLISLIAALAHNNLIGKDNLIPWHLPADLRHFKAVTLGKPVVMGRRTFESIGRPLPGRRNVVVSRNPQWQAEGVEVAPSLDAALALLTDCEEAMIIGGGQLYAEALPRADRLYLTYIDAQLNGDTHFPDYLSLGWQELERSTHPADDKNSYACEFVTLSRQR.

Residues 2–160 form the DHFR domain; the sequence is LISLIAALAH…YACEFVTLSR (159 aa).

The protein belongs to the dihydrofolate reductase family. Monomer.

The enzyme catalyses (6S)-5,6,7,8-tetrahydrofolate + NADP(+) = 7,8-dihydrofolate + NADPH + H(+). It functions in the pathway cofactor biosynthesis; tetrahydrofolate biosynthesis; 5,6,7,8-tetrahydrofolate from 7,8-dihydrofolate: step 1/1. In terms of biological role, key enzyme in folate metabolism. Catalyzes an essential reaction for de novo glycine and purine synthesis, and for DNA precursor synthesis. In Salmonella typhimurium, this protein is Dihydrofolate reductase type 3 (dhfrIII).